Consider the following 387-residue polypeptide: Diels-Alderase ORF3 (387 aa).

Belongs to the Diels-Alderase family.

It functions in the pathway secondary metabolite biosynthesis. Functionally, diels-Alderase; part of the gene cluster that mediates the biosynthesis of a tyrosine-derived cytochalasan acting as a fungal signal recognized by resistant rice plants and leads to avirulence in Pi33 resistant rice cultivars. The first step in the pathway is catalyzed by the hybrid PKS-NRPS ACE1, assisted by the enoyl reductase RAP1, that are responsible for fusion of the tyrosine precursor and the polyketide backbone. The polyketide synthase module (PKS) of ACE1 is responsible for the synthesis of the polyketide backbone and the downstream nonribosomal peptide synthetase (NRPS) amidates the carboxyl end of the polyketide with the tyrosine precursor. Because ACE1 lacks a designated enoylreductase (ER) domain, the required activity is provided the enoyl reductase RAP1. Reduction by the hydrolyase ORFZ, followed by dehydration and intra-molecular Diels-Alder cyclization by the Diels-Alderase ORF3 then yield the required isoindolone-fused macrocycle. A number of oxidative steps catalyzed by the tailoring enzymes identified within the cluster, including cytochrome P450 monooxygenases CYP1 to CYP4, the FAD-linked oxidoreductase OXR2 and the short-chain dehydrogenase/reductase OXR1, are further required to afford the final cytochalasans that confer avirulence and which have still to be identified. The monooxygenase CYP1 has been shown to be a site-selective C-18 hydroxylase whereas the function of CYP3 is the site-selective epoxidation of the C-6/C-7 olefin that is present in some intermediate compounds. Finally, SYN2 and RAP2 are not required for avirulence in Pi33 resistant rice cultivars. The chain is Diels-Alderase ORF3 from Pyricularia oryzae (strain 70-15 / ATCC MYA-4617 / FGSC 8958) (Rice blast fungus).